The primary structure comprises 316 residues: Transaldolase (316 aa).

Residue K132 is the Schiff-base intermediate with substrate of the active site.

This sequence belongs to the transaldolase family. Type 1 subfamily. Homodimer.

It is found in the cytoplasm. The enzyme catalyses D-sedoheptulose 7-phosphate + D-glyceraldehyde 3-phosphate = D-erythrose 4-phosphate + beta-D-fructose 6-phosphate. It participates in carbohydrate degradation; pentose phosphate pathway; D-glyceraldehyde 3-phosphate and beta-D-fructose 6-phosphate from D-ribose 5-phosphate and D-xylulose 5-phosphate (non-oxidative stage): step 2/3. Functionally, transaldolase is important for the balance of metabolites in the pentose-phosphate pathway. In Vibrio vulnificus (strain YJ016), this protein is Transaldolase.